Reading from the N-terminus, the 44-residue chain is MRDIKTYLSVAPVISTLWFGSLAGLLIEINRLFPDALVFPFFSF.

Residues 7–27 (YLSVAPVISTLWFGSLAGLLI) form a helical membrane-spanning segment.

It belongs to the PsaJ family.

It is found in the plastid. It localises to the chloroplast thylakoid membrane. Its function is as follows. May help in the organization of the PsaE and PsaF subunits. The sequence is that of Photosystem I reaction center subunit IX from Ceratophyllum demersum (Rigid hornwort).